We begin with the raw amino-acid sequence, 468 residues long: 6-phospho-beta-galactosidase (468 aa).

D-galactose 6-phosphate-binding residues include Gln19, His116, Asn159, Glu160, and Asn297. Glu160 functions as the Proton donor in the catalytic mechanism. Glu375 functions as the Nucleophile in the catalytic mechanism. Residues Ser428, Trp429, Lys435, and Tyr437 each contribute to the D-galactose 6-phosphate site.

It belongs to the glycosyl hydrolase 1 family.

It carries out the reaction a 6-phospho-beta-D-galactoside + H2O = D-galactose 6-phosphate + an alcohol. Its pathway is carbohydrate metabolism; lactose degradation; D-galactose 6-phosphate and beta-D-glucose from lactose 6-phosphate: step 1/1. This Streptococcus pyogenes serotype M5 (strain Manfredo) protein is 6-phospho-beta-galactosidase.